Consider the following 350-residue polypeptide: Zona pellucida-binding protein 1 (350 aa).

The N-terminal stretch at Met-1–Arg-38 is a signal peptide. 3 N-linked (GlcNAc...) asparagine glycosylation sites follow: Asn-113, Asn-186, and Asn-339.

The protein belongs to the zona pellucida-binding protein Sp38 family. In terms of processing, N-glycosylated. Expressed in testis. Detected in sperm cells.

It is found in the cytoplasmic vesicle. The protein localises to the secretory vesicle. It localises to the acrosome. Its subcellular location is the secreted. The protein resides in the acrosome membrane. Plays a role in acrosome compaction and sperm morphogenesis. Is implicated in sperm-oocyte interaction during fertilization. This Sus scrofa (Pig) protein is Zona pellucida-binding protein 1 (ZPBP).